Consider the following 460-residue polypeptide: Probable glucan endo-1,3-beta-glucosidase eglC (460 aa).

An N-terminal signal peptide occupies residues 1–18; the sequence is MQLAQLAAFAMTLATSEA. Residue E128 is the Proton donor of the active site. An N-linked (GlcNAc...) asparagine glycan is attached at N183. Residue E239 is the Nucleophile of the active site. 3 N-linked (GlcNAc...) asparagine glycosylation sites follow: N312, N367, and N373. The segment at 379-437 is disordered; it reads RPSGSASARPSAGAISSGSGSSSSGSGSSGSTGTSATSGQSSSSGSSAAAGSSSPAAFS. The segment covering 380–437 has biased composition (low complexity); it reads PSGSASARPSAGAISSGSGSSSSGSGSSGSTGTSATSGQSSSSGSSAAAGSSSPAAFS. S430 carries GPI-anchor amidated serine lipidation. Positions 431-460 are cleaved as a propeptide — removed in mature form; it reads SSPAAFSGASTLSGSLFGAVVAVFMTLAAL.

Belongs to the glycosyl hydrolase 17 family. The GPI-anchor is attached to the protein in the endoplasmic reticulum and serves to target the protein to the cell surface. There, the glucosamine-inositol phospholipid moiety is cleaved off and the GPI-modified mannoprotein is covalently attached via its lipidless GPI glycan remnant to the 1,6-beta-glucan of the outer cell wall layer.

Its subcellular location is the cell membrane. The protein localises to the secreted. It localises to the cell wall. It catalyses the reaction Hydrolysis of (1-&gt;3)-beta-D-glucosidic linkages in (1-&gt;3)-beta-D-glucans.. Its function is as follows. Glucanases play a role in cell expansion during growth, in cell-cell fusion during mating, and in spore release during sporulation. This enzyme may be involved in beta-glucan degradation and also function biosynthetically as a transglycosylase. The protein is Probable glucan endo-1,3-beta-glucosidase eglC (eglC) of Aspergillus niger (strain ATCC MYA-4892 / CBS 513.88 / FGSC A1513).